The following is a 270-amino-acid chain: Thiazole synthase (270 aa).

Lysine 112 acts as the Schiff-base intermediate with DXP in catalysis. Residues glycine 173, 199–200, and 221–222 contribute to the 1-deoxy-D-xylulose 5-phosphate site; these read AG and NS.

The protein belongs to the ThiG family. Homotetramer. Forms heterodimers with either ThiH or ThiS.

It is found in the cytoplasm. The catalysed reaction is [ThiS sulfur-carrier protein]-C-terminal-Gly-aminoethanethioate + 2-iminoacetate + 1-deoxy-D-xylulose 5-phosphate = [ThiS sulfur-carrier protein]-C-terminal Gly-Gly + 2-[(2R,5Z)-2-carboxy-4-methylthiazol-5(2H)-ylidene]ethyl phosphate + 2 H2O + H(+). Its pathway is cofactor biosynthesis; thiamine diphosphate biosynthesis. Catalyzes the rearrangement of 1-deoxy-D-xylulose 5-phosphate (DXP) to produce the thiazole phosphate moiety of thiamine. Sulfur is provided by the thiocarboxylate moiety of the carrier protein ThiS. In vitro, sulfur can be provided by H(2)S. This chain is Thiazole synthase, found in Pseudomonas entomophila (strain L48).